The sequence spans 131 residues: D-ribose pyranase (131 aa).

Catalysis depends on histidine 20, which acts as the Proton donor. Substrate is bound by residues aspartate 28, histidine 98, and 120 to 122; that span reads YAN.

Belongs to the RbsD / FucU family. RbsD subfamily. In terms of assembly, homodecamer.

It localises to the cytoplasm. The catalysed reaction is beta-D-ribopyranose = beta-D-ribofuranose. The protein operates within carbohydrate metabolism; D-ribose degradation; D-ribose 5-phosphate from beta-D-ribopyranose: step 1/2. Catalyzes the interconversion of beta-pyran and beta-furan forms of D-ribose. This chain is D-ribose pyranase, found in Symbiobacterium thermophilum (strain DSM 24528 / JCM 14929 / IAM 14863 / T).